A 341-amino-acid polypeptide reads, in one-letter code: Protein MENT (341 aa).

The signal sequence occupies residues 1–23 (MVPAAGALLWVLLLNLGPRAAGA). A disordered region spans residues 115-196 (AGKDSTSREL…SPSPTAMPSP (82 aa)). Over residues 127–155 (ATPNTAGSSSTRFIANSQEPEIRLTSSLP) the composition is skewed to polar residues.

Phosphorylation sites are present in the extracellular medium. As to expression, plasma. Overexpressed in lymphomas.

The protein resides in the secreted. Involved in control of cellular proliferation. Onconcogenic modifier contributing to the tumor suppressor function of DNMT3B. The sequence is that of Protein MENT (MENT) from Homo sapiens (Human).